A 663-amino-acid chain; its full sequence is UvrABC system protein B (663 aa).

Residues 1–10 show a composition bias toward basic and acidic residues; the sequence is MIDKRDDKPF. Residues 1-23 are disordered; that stretch reads MIDKRDDKPFKLKSKYKPSGDQP. The 388-residue stretch at 31 to 418 folds into the Helicase ATP-binding domain; that stretch reads DNIEGGEKAQ…TNTIIEQIIR (388 aa). An ATP-binding site is contributed by 44–51; the sequence is GATGTGKT. The Beta-hairpin signature appears at 97 to 120; it reads YYDYYQPEAYVPSSDTYIEKDSSV. The region spanning 435–601 is the Helicase C-terminal domain; it reads QMDDLLGEIN…TIKKDIRGLI (167 aa). Positions 627 to 662 constitute a UVR domain; it reads KEAINALQKQMQEAAELLDFELAAQMRDLILELKLM.

It belongs to the UvrB family. Forms a heterotetramer with UvrA during the search for lesions. Interacts with UvrC in an incision complex.

It localises to the cytoplasm. In terms of biological role, the UvrABC repair system catalyzes the recognition and processing of DNA lesions. A damage recognition complex composed of 2 UvrA and 2 UvrB subunits scans DNA for abnormalities. Upon binding of the UvrA(2)B(2) complex to a putative damaged site, the DNA wraps around one UvrB monomer. DNA wrap is dependent on ATP binding by UvrB and probably causes local melting of the DNA helix, facilitating insertion of UvrB beta-hairpin between the DNA strands. Then UvrB probes one DNA strand for the presence of a lesion. If a lesion is found the UvrA subunits dissociate and the UvrB-DNA preincision complex is formed. This complex is subsequently bound by UvrC and the second UvrB is released. If no lesion is found, the DNA wraps around the other UvrB subunit that will check the other stand for damage. The polypeptide is UvrABC system protein B (Streptococcus pyogenes serotype M3 (strain ATCC BAA-595 / MGAS315)).